The chain runs to 247 residues: tRNA pseudouridine synthase A (247 aa).

The active-site Nucleophile is Asp-53. Tyr-111 serves as a coordination point for substrate.

Belongs to the tRNA pseudouridine synthase TruA family. As to quaternary structure, homodimer.

It catalyses the reaction uridine(38/39/40) in tRNA = pseudouridine(38/39/40) in tRNA. Its function is as follows. Formation of pseudouridine at positions 38, 39 and 40 in the anticodon stem and loop of transfer RNAs. This Bacillus pumilus (strain SAFR-032) protein is tRNA pseudouridine synthase A.